Here is a 486-residue protein sequence, read N- to C-terminus: Alpha-L-arabinofuranosidase B (486 aa).

Positions 1 to 25 (MLSLKAVLRFASVAVAVVLPTLAQA) are cleaved as a signal peptide. A glycan (N-linked (GlcNAc...) asparagine) is linked at N42. The catalytic stretch occupies residues 45 to 342 (LVKQRADPQI…KLYWRSDGTP (298 aa)). Residue D51 is the Proton acceptor of the active site. The active-site Proton donor is the E229. Residues N302, N416, and N426 are each glycosylated (N-linked (GlcNAc...) asparagine). Residues 359–467 (SSADQTLYVG…AGSYLVSGGN (109 aa)) are ABD.

The protein belongs to the glycosyl hydrolase 43 family.

It is found in the secreted. The catalysed reaction is Hydrolysis of terminal non-reducing alpha-L-arabinofuranoside residues in alpha-L-arabinosides.. The protein operates within glycan metabolism; L-arabinan degradation. Functionally, secreted arabinofuranosidase that causes degradation of rice cell wall components during infection. Required for virulence. This is Alpha-L-arabinofuranosidase B from Pyricularia oryzae (strain 70-15 / ATCC MYA-4617 / FGSC 8958) (Rice blast fungus).